Reading from the N-terminus, the 250-residue chain is Aminoglycoside 3'-phosphotransferase (250 aa).

The Proton acceptor role is filled by D178.

Belongs to the aminoglycoside phosphotransferase family.

The enzyme catalyses kanamycin A + ATP = kanamycin 3'-phosphate + ADP + H(+). Its function is as follows. Resistance to kanamycin and structurally-related aminoglycosides, including amikacin. The sequence is that of Aminoglycoside 3'-phosphotransferase (aphA-7) from Campylobacter jejuni.